We begin with the raw amino-acid sequence, 356 residues long: Tyrosine recombinase XerS (356 aa).

Residues 16-121 (TMPWYILEYY…ALSSLYKYLT (106 aa)) enclose the Core-binding (CB) domain. Residues 169-354 (EFLQYIDTEY…VNDEQKNALD (186 aa)) form the Tyr recombinase domain. Catalysis depends on residues Arg-210, Lys-234, His-306, Arg-309, and His-332. Tyr-341 functions as the O-(3'-phospho-DNA)-tyrosine intermediate in the catalytic mechanism.

The protein belongs to the 'phage' integrase family. XerS subfamily.

The protein resides in the cytoplasm. FtsK is required for recombination. Its function is as follows. Site-specific tyrosine recombinase, which acts by catalyzing the cutting and rejoining of the recombining DNA molecules. Essential to convert dimers of the bacterial chromosome into monomers to permit their segregation at cell division. The polypeptide is Tyrosine recombinase XerS (Streptococcus sanguinis (strain SK36)).